The following is a 109-amino-acid chain: FK506-binding protein (109 aa).

The region spanning 20–108 is the PPIase FKBP-type domain; sequence GKEITVHYTG…IFEVELLKVY (89 aa).

Belongs to the FKBP-type PPIase family.

It catalyses the reaction [protein]-peptidylproline (omega=180) = [protein]-peptidylproline (omega=0). Its activity is regulated as follows. Inhibited by FK506. PPIases accelerate the folding of proteins. This is FK506-binding protein (fbp) from Neisseria meningitidis serogroup B (strain ATCC BAA-335 / MC58).